The chain runs to 337 residues: Transaldolase (337 aa).

A Nuclear localization signal motif is present at residues 1-10 (MSGSPVKRQR). The residue at position 115 (Lys115) is an N6-acetyllysine. Residue Lys142 is the Schiff-base intermediate with substrate of the active site. Lys219 carries the N6-acetyllysine modification. A phosphoserine mark is found at Ser237 and Ser256. N6-acetyllysine occurs at positions 269, 286, and 321.

Belongs to the transaldolase family. Type 1 subfamily. As to quaternary structure, homodimer. Interacts with KPNA1 and KPNA4.

It localises to the nucleus. The protein resides in the cytoplasm. The catalysed reaction is D-sedoheptulose 7-phosphate + D-glyceraldehyde 3-phosphate = D-erythrose 4-phosphate + beta-D-fructose 6-phosphate. Its pathway is carbohydrate degradation; pentose phosphate pathway; D-glyceraldehyde 3-phosphate and beta-D-fructose 6-phosphate from D-ribose 5-phosphate and D-xylulose 5-phosphate (non-oxidative stage): step 2/3. Its function is as follows. Catalyzes the rate-limiting step of the non-oxidative phase in the pentose phosphate pathway. Catalyzes the reversible conversion of sedheptulose-7-phosphate and D-glyceraldehyde 3-phosphate into erythrose-4-phosphate and beta-D-fructose 6-phosphate. The chain is Transaldolase (TALDO1) from Cricetulus griseus (Chinese hamster).